The following is a 515-amino-acid chain: Bifunctional NAD(P)H-hydrate repair enzyme Nnr (515 aa).

The segment at 1–227 is NAD(P)H-hydrate epimerase; the sequence is MTDHTMKKNP…GLDSWLAGQE (227 aa). The 203-residue stretch at 23 to 225 folds into the YjeF N-terminal domain; the sequence is IRRGEREAAD…SLGLDSWLAG (203 aa). The interval 71–75 is NADPHX 1; for epimerase activity; sequence NNGGD. Positions 72 and 135 each coordinate K(+). The tract at residues 139–145 is NADPHX 1; for epimerase activity; it reads GTGLRQA. D168 contacts (6S)-NADPHX. Residue S171 participates in K(+) binding. Residues 234–501 form the YjeF C-terminal domain; it reads SAEQLSHWLK…STLQRIVNPE (268 aa). The interval 235–515 is ADP-dependent (S)-NAD(P)H-hydrate dehydratase; the sequence is AEQLSHWLKP…NHDESSNSAP (281 aa). A (6S)-NADPHX-binding site is contributed by G329. Positions 375-381 are NADPHX 2; for dehydratase activity; the sequence is HPGEAAR. ADP-binding positions include 412–416 and 432–441; these read KGAGT and NAGMASGGMG. D442 provides a ligand contact to (6S)-NADPHX.

This sequence in the N-terminal section; belongs to the NnrE/AIBP family. It in the C-terminal section; belongs to the NnrD/CARKD family. It depends on K(+) as a cofactor.

It catalyses the reaction (6S)-NADHX + ADP = AMP + phosphate + NADH + H(+). The enzyme catalyses (6S)-NADPHX + ADP = AMP + phosphate + NADPH + H(+). It carries out the reaction (6R)-NADHX = (6S)-NADHX. The catalysed reaction is (6R)-NADPHX = (6S)-NADPHX. In terms of biological role, bifunctional enzyme that catalyzes the epimerization of the S- and R-forms of NAD(P)HX and the dehydration of the S-form of NAD(P)HX at the expense of ADP, which is converted to AMP. This allows the repair of both epimers of NAD(P)HX, a damaged form of NAD(P)H that is a result of enzymatic or heat-dependent hydration. This chain is Bifunctional NAD(P)H-hydrate repair enzyme Nnr (nnr), found in Escherichia coli (strain K12).